Here is a 339-residue protein sequence, read N- to C-terminus: DNA-directed RNA polymerase subunit alpha (339 aa).

The segment at 1–235 (MVREEVAVST…DLFIPFLHGE (235 aa)) is alpha N-terminal domain (alpha-NTD). The tract at residues 267-339 (KAIALECIFI…FTIDLPKNKF (73 aa)) is alpha C-terminal domain (alpha-CTD).

Belongs to the RNA polymerase alpha chain family. In terms of assembly, in plastids the minimal PEP RNA polymerase catalytic core is composed of four subunits: alpha, beta, beta', and beta''. When a (nuclear-encoded) sigma factor is associated with the core the holoenzyme is formed, which can initiate transcription.

It localises to the plastid. It is found in the chloroplast. It carries out the reaction RNA(n) + a ribonucleoside 5'-triphosphate = RNA(n+1) + diphosphate. Functionally, DNA-dependent RNA polymerase catalyzes the transcription of DNA into RNA using the four ribonucleoside triphosphates as substrates. In Drimys granadensis, this protein is DNA-directed RNA polymerase subunit alpha.